A 270-amino-acid chain; its full sequence is Non-structural maintenance of chromosomes element 1 homolog (270 aa).

The segment at Cys185–Lys226 adopts an RING-type; atypical zinc-finger fold. Positions Leu236–Arg270 are disordered. Polar residues-rich tracts occupy residues Ser237 to Gln248 and Ser259 to Arg270.

It belongs to the NSE1 family. Component of the SMC5-SMC6 complex.

It is found in the nucleus. The protein localises to the chromosome. Its subcellular location is the telomere. It carries out the reaction S-ubiquitinyl-[E2 ubiquitin-conjugating enzyme]-L-cysteine + [acceptor protein]-L-lysine = [E2 ubiquitin-conjugating enzyme]-L-cysteine + N(6)-ubiquitinyl-[acceptor protein]-L-lysine.. Functionally, RING-type zinc finger-containing E3 ubiquitin ligase that assembles with melanoma antigen protein (MAGE) to catalyze the direct transfer of ubiquitin from E2 ubiquitin-conjugating enzyme to a specific substrate. Within MAGE-RING ubiquitin ligase complex, MAGE stimulates and specifies ubiquitin ligase activity likely through recruitment and/or stabilization of the E2 ubiquitin-conjugating enzyme at the E3:substrate complex. Involved in maintenance of genome integrity, DNA damage response and DNA repair. The protein is Non-structural maintenance of chromosomes element 1 homolog (nsmce1) of Xenopus tropicalis (Western clawed frog).